The chain runs to 225 residues: Transcription factor HES-7 (225 aa).

The region spanning 12-69 (GPKMLKPLVEKRRRDRINRSLEELRLLLLERTRDQNLRNPKLEKAEILEFAVGYLRER) is the bHLH domain. Residues 92–122 (YLSGFRECLLRLAAFAHDASPAARSQLFSAL) enclose the Orange domain. Residues 124-225 (GYRRPKPPRP…PPPAFWRPWP (102 aa)) are disordered. 2 stretches are compositionally biased toward pro residues: residues 140-149 (LPAPRPPLDP) and 213-225 (PSLP…RPWP). Residues 221–224 (WRPW) carry the WRPW motif motif.

Transcription repression requires formation of a complex with a corepressor protein of the Groucho/TLE family.

Its subcellular location is the nucleus. Transcriptional repressor. Represses transcription from both N box- and E box-containing promoters. May with HES1, cooperatively regulate somite formation in the presomitic mesoderm (PSM). May function as a segmentation clock, which is essential for coordinated somite segmentation. The polypeptide is Transcription factor HES-7 (Hes7) (Mus musculus (Mouse)).